The sequence spans 426 residues: Serine--tRNA ligase (426 aa).

232-234 (TAE) lines the L-serine pocket. 263–265 (RRE) serves as a coordination point for ATP. Residue E286 coordinates L-serine. 350–353 (EISS) contacts ATP. L-serine is bound at residue S385.

The protein belongs to the class-II aminoacyl-tRNA synthetase family. Type-1 seryl-tRNA synthetase subfamily. As to quaternary structure, homodimer. The tRNA molecule binds across the dimer.

The protein resides in the cytoplasm. It carries out the reaction tRNA(Ser) + L-serine + ATP = L-seryl-tRNA(Ser) + AMP + diphosphate + H(+). The catalysed reaction is tRNA(Sec) + L-serine + ATP = L-seryl-tRNA(Sec) + AMP + diphosphate + H(+). It functions in the pathway aminoacyl-tRNA biosynthesis; selenocysteinyl-tRNA(Sec) biosynthesis; L-seryl-tRNA(Sec) from L-serine and tRNA(Sec): step 1/1. In terms of biological role, catalyzes the attachment of serine to tRNA(Ser). Is also able to aminoacylate tRNA(Sec) with serine, to form the misacylated tRNA L-seryl-tRNA(Sec), which will be further converted into selenocysteinyl-tRNA(Sec). This is Serine--tRNA ligase from Fervidobacterium nodosum (strain ATCC 35602 / DSM 5306 / Rt17-B1).